The chain runs to 763 residues: Putative alpha-1,3-mannosyltransferase MNN15 (763 aa).

The Cytoplasmic portion of the chain corresponds to 1–7; that stretch reads MRFTLKK. The helical transmembrane segment at 8–28 threads the bilayer; that stretch reads IFFVFLTLLIISIGYLLLQSV. At 29–763 the chain is on the lumenal side; that stretch reads DLQRIRELLH…KDATTVRLRI (735 aa). Residues Asn71, Asn157, and Asn169 are each glycosylated (N-linked (GlcNAc...) asparagine). The tract at residues 617-659 is disordered; sequence LVPPDLPNQREPGSPPDTKPEMEFRKSWKSRKKDTDEINEKLP. A compositionally biased stretch (basic and acidic residues) spans 649–659; the sequence is KDTDEINEKLP.

This sequence belongs to the MNN1/MNT family.

Its subcellular location is the golgi apparatus membrane. It functions in the pathway protein modification; protein glycosylation. Functionally, responsible for addition of the terminal mannose residues to the outer chain of core N-linked polysaccharides and to O-linked mannotriose. Implicated in late Golgi modifications. The chain is Putative alpha-1,3-mannosyltransferase MNN15 (MNN15) from Candida albicans (strain SC5314 / ATCC MYA-2876) (Yeast).